Consider the following 438-residue polypeptide: Probable inactive protein kinase 38 (438 aa).

A Protein kinase domain is found at 77–340; the sequence is PRFRLALGKG…FTELQPQYFL (264 aa).

It belongs to the protein kinase superfamily. Tyr protein kinase family.

The protein is Probable inactive protein kinase 38 (36) of Equus caballus (Horse).